The primary structure comprises 297 residues: Urease accessory protein UreD 2 (297 aa).

This sequence belongs to the UreD family. UreD, UreF and UreG form a complex that acts as a GTP-hydrolysis-dependent molecular chaperone, activating the urease apoprotein by helping to assemble the nickel containing metallocenter of UreC. The UreE protein probably delivers the nickel.

It is found in the cytoplasm. Functionally, required for maturation of urease via the functional incorporation of the urease nickel metallocenter. The chain is Urease accessory protein UreD 2 from Methylorubrum populi (strain ATCC BAA-705 / NCIMB 13946 / BJ001) (Methylobacterium populi).